We begin with the raw amino-acid sequence, 118 residues long: Large ribosomal subunit protein bL19 (118 aa).

This sequence belongs to the bacterial ribosomal protein bL19 family.

Its function is as follows. This protein is located at the 30S-50S ribosomal subunit interface and may play a role in the structure and function of the aminoacyl-tRNA binding site. The protein is Large ribosomal subunit protein bL19 of Onion yellows phytoplasma (strain OY-M).